The following is a 242-amino-acid chain: 3-deoxy-manno-octulosonate cytidylyltransferase (242 aa).

This sequence belongs to the KdsB family.

It localises to the cytoplasm. It catalyses the reaction 3-deoxy-alpha-D-manno-oct-2-ulosonate + CTP = CMP-3-deoxy-beta-D-manno-octulosonate + diphosphate. It participates in nucleotide-sugar biosynthesis; CMP-3-deoxy-D-manno-octulosonate biosynthesis; CMP-3-deoxy-D-manno-octulosonate from 3-deoxy-D-manno-octulosonate and CTP: step 1/1. Its pathway is bacterial outer membrane biogenesis; lipopolysaccharide biosynthesis. Functionally, activates KDO (a required 8-carbon sugar) for incorporation into bacterial lipopolysaccharide in Gram-negative bacteria. This Anaeromyxobacter dehalogenans (strain 2CP-1 / ATCC BAA-258) protein is 3-deoxy-manno-octulosonate cytidylyltransferase.